The chain runs to 269 residues: 2-heptyl-3-hydroxy-4(1H)-quinolone dioxygenase (269 aa).

His97 lines the substrate pocket. Catalysis depends on His246, which acts as the Proton donor/acceptor.

This sequence belongs to the AB hydrolase superfamily. Monomer.

It catalyses the reaction 2-heptyl-3-hydroxy-4(1H)-quinolone + O2 = N-octanoylanthranilate + CO + H(+). Its function is as follows. Ring-cleaving dioxygenase involved in the degradation pathway of the Pseudomonas aeruginosa quorum sensing signal molecules HHQ (2-heptyl-4-quinolone) and PQS (2-heptyl-3-hydroxy-4(1H)-quinolone) to anthranilate. Catalyzes the cleavage of PQS to form N-octanoylanthranilate and carbon monoxide. Thus, leads to the inactivation of PQS that plays a central role in the regulation of virulence factor production by P.aeruginosa, thereby quenching the production of antimicrobials, which may contribute to the competitiveness of M.abscessus in presence of P.aeruginosa. In vitro, can also use other 2-alkyl-3-hydroxy-4(1H)-quinolone (AHQ) substrates with shorter alkyl substituents at C2, but with lower efficiency. The chain is 2-heptyl-3-hydroxy-4(1H)-quinolone dioxygenase from Mycobacteroides abscessus (strain ATCC 19977 / DSM 44196 / CCUG 20993 / CIP 104536 / JCM 13569 / NCTC 13031 / TMC 1543 / L948) (Mycobacterium abscessus).